Reading from the N-terminus, the 147-residue chain is Bis(5'-nucleosyl)-tetraphosphatase [asymmetrical] (147 aa).

One can recognise a Nudix hydrolase domain in the interval 1 to 139 (MALRACGLII…EMKAALQEGH (139 aa)). A2 carries the post-translational modification N-acetylalanine. A Nudix box motif is present at residues 43 to 64 (GHVEPGEDDLETALRETQEEAG).

Belongs to the Nudix hydrolase family. A divalent metal cation serves as cofactor.

The catalysed reaction is P(1),P(4)-bis(5'-guanosyl) tetraphosphate + H2O = GMP + GTP + 2 H(+). It catalyses the reaction a 5'-end CoA-ribonucleoside in mRNA + H2O = a 5'-end phospho-adenosine-phospho-ribonucleoside in mRNA + (R)-4'-phosphopantetheine + 2 H(+). It carries out the reaction a 5'-end FAD-phospho-ribonucleoside in mRNA + H2O = a 5'-end phospho-adenosine-phospho-ribonucleoside in mRNA + FMN + 2 H(+). Functionally, catalyzes the asymmetric hydrolysis of diadenosine 5',5'''-P1,P4-tetraphosphate (Ap4A) to yield AMP and ATP. Exhibits decapping activity towards FAD-capped RNAs and dpCoA-capped RNAs in vitro. The protein is Bis(5'-nucleosyl)-tetraphosphatase [asymmetrical] (NUDT2) of Homo sapiens (Human).